A 298-amino-acid polypeptide reads, in one-letter code: Release factor glutamine methyltransferase (298 aa).

S-adenosyl-L-methionine is bound by residues 131–135 (GTGTG), D162, W189, and N205. 205 to 208 (NPPY) provides a ligand contact to substrate.

It belongs to the protein N5-glutamine methyltransferase family. PrmC subfamily.

The catalysed reaction is L-glutaminyl-[peptide chain release factor] + S-adenosyl-L-methionine = N(5)-methyl-L-glutaminyl-[peptide chain release factor] + S-adenosyl-L-homocysteine + H(+). Methylates the class 1 translation termination release factors RF1/PrfA and RF2/PrfB on the glutamine residue of the universally conserved GGQ motif. The polypeptide is Release factor glutamine methyltransferase (Pasteurella multocida (strain Pm70)).